We begin with the raw amino-acid sequence, 495 residues long: Meiosis-specific nuclear structural protein 1 (495 aa).

Residues 1-314 (MASKRRNMSC…KLEEMLRQRE (314 aa)) are interaction with BBOF1. A coiled-coil region spans residues 59–410 (LLQNEQFELD…QLEHRRAVEK (352 aa)). A Phosphotyrosine modification is found at Y188.

It belongs to the MNS1 family. Able to form oligomers. Microtubule inner protein component of sperm flagellar doublet microtubules. Interacts with ODAD1. Interacts with BBOF1.

Its subcellular location is the nucleus. It localises to the cytoplasm. It is found in the cytoskeleton. The protein localises to the cilium axoneme. The protein resides in the flagellum axoneme. Functionally, microtubule inner protein (MIP) part of the dynein-decorated doublet microtubules (DMTs) in cilia axoneme, which is required for motile cilia beating. May play a role in the control of meiotic division and germ cell differentiation through regulation of pairing and recombination during meiosis. Required for sperm flagella assembly. May play a role in the assembly and function of the outer dynein arm-docking complex (ODA-DC). ODA-DC mediates outer dynein arms (ODA) binding onto the axonemal doublet microtubules. This chain is Meiosis-specific nuclear structural protein 1 (MNS1), found in Macaca fascicularis (Crab-eating macaque).